The chain runs to 460 residues: ATP synthase subunit beta (460 aa).

150 to 157 (GGAGVGKT) contributes to the ATP binding site.

The protein belongs to the ATPase alpha/beta chains family. F-type ATPases have 2 components, CF(1) - the catalytic core - and CF(0) - the membrane proton channel. CF(1) has five subunits: alpha(3), beta(3), gamma(1), delta(1), epsilon(1). CF(0) has three main subunits: a(1), b(2) and c(9-12). The alpha and beta chains form an alternating ring which encloses part of the gamma chain. CF(1) is attached to CF(0) by a central stalk formed by the gamma and epsilon chains, while a peripheral stalk is formed by the delta and b chains.

Its subcellular location is the cell inner membrane. The catalysed reaction is ATP + H2O + 4 H(+)(in) = ADP + phosphate + 5 H(+)(out). Its function is as follows. Produces ATP from ADP in the presence of a proton gradient across the membrane. The catalytic sites are hosted primarily by the beta subunits. The sequence is that of ATP synthase subunit beta from Proteus mirabilis (strain HI4320).